The chain runs to 255 residues: Taurine import ATP-binding protein TauB (255 aa).

The ABC transporter domain maps to 2–229 (LQISHLYADY…RFVAGESSRS (228 aa)). 34 to 41 (GPSGCGKT) is an ATP binding site.

The protein belongs to the ABC transporter superfamily. Taurine importer (TC 3.A.1.17.1) family. As to quaternary structure, the complex is composed of two ATP-binding proteins (TauB), two transmembrane proteins (TauC) and a solute-binding protein (TauA).

Its subcellular location is the cell inner membrane. The enzyme catalyses taurine(out) + ATP + H2O = taurine(in) + ADP + phosphate + H(+). In terms of biological role, part of the ABC transporter complex TauABC involved in taurine import. Responsible for energy coupling to the transport system. This Shigella flexneri protein is Taurine import ATP-binding protein TauB.